A 601-amino-acid polypeptide reads, in one-letter code: DNA topoisomerase I, mitochondrial (601 aa).

The N-terminal 50 residues, methionine 1–glycine 50, are a transit peptide targeting the mitochondrion. Residues arginine 22–glutamate 48 form a disordered region. Interaction with DNA stretches follow at residues lysine 261 to tyrosine 262, arginine 324 to lysine 329, and threonine 421 to lysine 423. Residues cysteine 268 to phenylalanine 601 enclose the Topo IB-type catalytic domain. The active-site O-(3'-phospho-DNA)-tyrosine intermediate is tyrosine 559.

The protein belongs to the type IB topoisomerase family. The cofactor is Ca(2+). Mg(2+) is required as a cofactor. In terms of tissue distribution, ubiquitous; highest in skeletal muscle, heart, brain and fetal liver.

The protein resides in the mitochondrion. The catalysed reaction is ATP-independent breakage of single-stranded DNA, followed by passage and rejoining.. Releases the supercoiling and torsional tension of DNA introduced during duplication of mitochondrial DNA by transiently cleaving and rejoining one strand of the DNA duplex. Introduces a single-strand break via transesterification at a target site in duplex DNA. The scissile phosphodiester is attacked by the catalytic tyrosine of the enzyme, resulting in the formation of a DNA-(3'-phosphotyrosyl)-enzyme intermediate and the expulsion of a 5'-OH DNA strand. The free DNA strand then rotates around the intact phosphodiester bond on the opposing strand, thus removing DNA supercoils. Finally, in the religation step, the DNA 5'-OH attacks the covalent intermediate to expel the active-site tyrosine and restore the DNA phosphodiester backbone. This is DNA topoisomerase I, mitochondrial (TOP1MT) from Homo sapiens (Human).